The sequence spans 552 residues: Probable glucomannan 4-beta-mannosyltransferase 10 (552 aa).

A helical transmembrane segment spans residues 62-82; sequence IVPLFKCLVAFCLIISLLVFI. Asp161 is an active-site residue. Substrate is bound by residues Asp220 and Asp222. Asp314 is a catalytic residue. 4 consecutive transmembrane segments (helical) span residues 393–413, 430–450, 509–529, and 530–550; these read IIVHCFTFIFYCVILPTSVFF, ITLCIVIATPRSFYLVIFWIL, EIMVGIYILCCACYGLFFGNT, and LLYLYLFMQAVAFLISGVGFV.

It belongs to the glycosyltransferase 2 family. Plant cellulose synthase-like A subfamily.

It is found in the golgi apparatus membrane. It catalyses the reaction GDP-mannose + (glucomannan)n = GDP + (glucomannan)n+1.. Probable mannan synthase which consists of a 4-beta-mannosyltransferase activity on mannan using GDP-mannose. The beta-1,4-mannan product is the backbone for galactomannan synthesis by galactomannan galactosyltransferase. Galactomannan is a noncellulosic polysaccharides of plant cell wall. The protein is Probable glucomannan 4-beta-mannosyltransferase 10 of Arabidopsis thaliana (Mouse-ear cress).